The following is an 873-amino-acid chain: DNA mismatch repair protein MutS (873 aa).

625-632 (GPNMGGKS) provides a ligand contact to ATP.

This sequence belongs to the DNA mismatch repair MutS family.

In terms of biological role, this protein is involved in the repair of mismatches in DNA. It is possible that it carries out the mismatch recognition step. This protein has a weak ATPase activity. This chain is DNA mismatch repair protein MutS, found in Xanthomonas euvesicatoria pv. vesicatoria (strain 85-10) (Xanthomonas campestris pv. vesicatoria).